A 109-amino-acid polypeptide reads, in one-letter code: Putative polyketide cyclase (109 aa).

The protein to polyketide cyclases.

Its function is as follows. Involved in developmentally regulated synthesis of a compound biosynthetically related to polyketide antibiotics which is essential for spore color in Streptomyces halstedii. In Streptomyces halstedii, this protein is Putative polyketide cyclase (sch4).